A 491-amino-acid polypeptide reads, in one-letter code: Protein nucleotidyltransferase YdiU (491 aa).

Positions 94, 96, 97, 117, 129, 130, 180, and 187 each coordinate ATP. Asp256 acts as the Proton acceptor in catalysis. Mg(2+)-binding residues include Asn257 and Asp266. Asp266 is a binding site for ATP.

Belongs to the SELO family. It depends on Mg(2+) as a cofactor. Mn(2+) serves as cofactor.

The catalysed reaction is L-seryl-[protein] + ATP = 3-O-(5'-adenylyl)-L-seryl-[protein] + diphosphate. The enzyme catalyses L-threonyl-[protein] + ATP = 3-O-(5'-adenylyl)-L-threonyl-[protein] + diphosphate. It carries out the reaction L-tyrosyl-[protein] + ATP = O-(5'-adenylyl)-L-tyrosyl-[protein] + diphosphate. It catalyses the reaction L-histidyl-[protein] + UTP = N(tele)-(5'-uridylyl)-L-histidyl-[protein] + diphosphate. The catalysed reaction is L-seryl-[protein] + UTP = O-(5'-uridylyl)-L-seryl-[protein] + diphosphate. The enzyme catalyses L-tyrosyl-[protein] + UTP = O-(5'-uridylyl)-L-tyrosyl-[protein] + diphosphate. Its function is as follows. Nucleotidyltransferase involved in the post-translational modification of proteins. It can catalyze the addition of adenosine monophosphate (AMP) or uridine monophosphate (UMP) to a protein, resulting in modifications known as AMPylation and UMPylation. The sequence is that of Protein nucleotidyltransferase YdiU from Clostridium botulinum (strain Eklund 17B / Type B).